A 162-amino-acid chain; its full sequence is uncharacterized protein (162 aa).

This sequence to R.meliloti R02472.

This is an uncharacterized protein from Escherichia coli (strain K12).